A 96-amino-acid polypeptide reads, in one-letter code: Co-chaperonin GroES (96 aa).

This sequence belongs to the GroES chaperonin family. In terms of assembly, heptamer of 7 subunits arranged in a ring. Interacts with the chaperonin GroEL.

It is found in the cytoplasm. Its function is as follows. Together with the chaperonin GroEL, plays an essential role in assisting protein folding. The GroEL-GroES system forms a nano-cage that allows encapsulation of the non-native substrate proteins and provides a physical environment optimized to promote and accelerate protein folding. GroES binds to the apical surface of the GroEL ring, thereby capping the opening of the GroEL channel. In Idiomarina loihiensis (strain ATCC BAA-735 / DSM 15497 / L2-TR), this protein is Co-chaperonin GroES.